The chain runs to 251 residues: tRNA-cytidine(32) 2-sulfurtransferase 2 (251 aa).

The short motif at 33–38 (SGGKDS) is the PP-loop motif element. 3 residues coordinate [4Fe-4S] cluster: C108, C111, and C199.

It belongs to the TtcA family. As to quaternary structure, homodimer. It depends on Mg(2+) as a cofactor. Requires [4Fe-4S] cluster as cofactor.

The protein localises to the cytoplasm. It carries out the reaction cytidine(32) in tRNA + S-sulfanyl-L-cysteinyl-[cysteine desulfurase] + AH2 + ATP = 2-thiocytidine(32) in tRNA + L-cysteinyl-[cysteine desulfurase] + A + AMP + diphosphate + H(+). It participates in tRNA modification. Its function is as follows. Catalyzes the ATP-dependent 2-thiolation of cytidine in position 32 of tRNA, to form 2-thiocytidine (s(2)C32). The sulfur atoms are provided by the cysteine/cysteine desulfurase (IscS) system. The chain is tRNA-cytidine(32) 2-sulfurtransferase 2 from Francisella tularensis subsp. tularensis (strain WY96-3418).